The chain runs to 98 residues: UPF0473 protein LAR_0522 (98 aa).

Belongs to the UPF0473 family.

In Limosilactobacillus reuteri subsp. reuteri (strain JCM 1112) (Lactobacillus reuteri), this protein is UPF0473 protein LAR_0522.